Here is a 254-residue protein sequence, read N- to C-terminus: Phosphatidylglycerophosphatase B (254 aa).

A helical transmembrane segment spans residues 2 to 24 (RSIARRTAVGAALLLVMPVAVWI). Topologically, residues 25–54 (SGWRWQPGEQSWLLKAAFWVTETVTQPWGV) are periplasmic. A helical membrane pass occupies residues 55–66 (ITHLILFGWFLW). At 67-71 (CLRFR) the chain is on the cytoplasmic side. A helical membrane pass occupies residues 72–94 (IKAAFVLFAILAAAILVGQGVKS). Residues 95–161 (WIKDKVQEPR…QKETGFAFPS (67 aa)) are Periplasmic-facing. The phosphatase sequence motif I stretch occupies residues 97-105 (KDKVQEPRP). Residues 160–163 (PSGH) are phosphatase sequence motif II. The chain crosses the membrane as a helical span at residues 162-176 (GHTMFAASWALLAVG). H163 serves as the catalytic Proton donor; for a subset of substrates. Residues 177–182 (LLWPRR) lie on the Cytoplasmic side of the membrane. Residues 183 to 202 (RTLTIAILLVWATGVMGSRL) form a helical membrane-spanning segment. Positions 200 to 211 (SRLLLGMHWPRD) are phosphatase sequence motif III. Over 203–208 (LLGMHW) the chain is Periplasmic. H207 (nucleophile) is an active-site residue. Residues 209-232 (PRDLVVATLISWALVAVATWLAQR) form a helical membrane-spanning segment. At 233–254 (ICGPLTPPAEENREIAQREQES) the chain is on the cytoplasmic side.

It belongs to the PA-phosphatase related phosphoesterase family. Post-translationally, the N-terminus is blocked.

Its subcellular location is the cell inner membrane. The protein localises to the cell outer membrane. It catalyses the reaction a 1,2-diacyl-sn-glycero-3-phospho-(1'-sn-glycero-3'-phosphate) + H2O = a 1,2-diacyl-sn-glycero-3-phospho-(1'-sn-glycerol) + phosphate. It carries out the reaction a 1,2-diacyl-sn-glycerol 3-diphosphate + H2O = a 1,2-diacyl-sn-glycero-3-phosphate + phosphate + H(+). The catalysed reaction is a 1,2-diacyl-sn-glycero-3-phosphate + H2O = a 1,2-diacyl-sn-glycerol + phosphate. The enzyme catalyses di-trans,octa-cis-undecaprenyl diphosphate + H2O = di-trans,octa-cis-undecaprenyl phosphate + phosphate + H(+). Its pathway is phospholipid metabolism; phosphatidylglycerol biosynthesis; phosphatidylglycerol from CDP-diacylglycerol: step 2/2. In terms of biological role, catalyzes the dephosphorylation of diacylglycerol diphosphate (DGPP) to phosphatidate (PA) and the subsequent dephosphorylation of PA to diacylglycerol (DAG). Also has undecaprenyl pyrophosphate phosphatase activity, required for the biosynthesis of the lipid carrier undecaprenyl phosphate. Can also use lysophosphatidic acid (LPA) and phosphatidylglycerophosphate as substrates. The pattern of activities varies according to subcellular location, PGP phosphatase activity is higher in the cytoplasmic membrane, whereas PA and LPA phosphatase activities are higher in the outer membrane. Activity is independent of a divalent cation ion and insensitive to inhibition by N-ethylmaleimide. This is Phosphatidylglycerophosphatase B (pgpB) from Escherichia coli O157:H7.